The primary structure comprises 66 residues: Large ribosomal subunit protein bL35 (66 aa).

The segment covering 1–46 has biased composition (basic residues); that stretch reads MPKMKTHRASAKRFKRTGNGGLKRHHAFTGHRFHGKTKKQRRHLRK. Residues 1–50 form a disordered region; it reads MPKMKTHRASAKRFKRTGNGGLKRHHAFTGHRFHGKTKKQRRHLRKAAMV.

Belongs to the bacterial ribosomal protein bL35 family.

The sequence is that of Large ribosomal subunit protein bL35 from Lactobacillus delbrueckii subsp. bulgaricus (strain ATCC 11842 / DSM 20081 / BCRC 10696 / JCM 1002 / NBRC 13953 / NCIMB 11778 / NCTC 12712 / WDCM 00102 / Lb 14).